A 445-amino-acid chain; its full sequence is Deoxyribodipyrimidine photo-lyase (445 aa).

Residues 20 to 148 (SYVVYWMQAS…QVESNVIVPV (129 aa)) form the Photolyase/cryptochrome alpha/beta domain. DNA is bound at residue Arg-239.

Belongs to the DNA photolyase class-2 family. The cofactor is FAD. Coenzyme F420-(gamma-Glu)n serves as cofactor.

The enzyme catalyses cyclobutadipyrimidine (in DNA) = 2 pyrimidine residues (in DNA).. Involved in repair of UV radiation-induced DNA damage. Catalyzes the light-dependent monomerization (300-600 nm) of cyclobutyl pyrimidine dimers (in cis-syn configuration), which are formed between adjacent bases on the same DNA strand upon exposure to ultraviolet radiation. The polypeptide is Deoxyribodipyrimidine photo-lyase (phr) (Methanothermobacter thermautotrophicus (strain ATCC 29096 / DSM 1053 / JCM 10044 / NBRC 100330 / Delta H) (Methanobacterium thermoautotrophicum)).